A 238-amino-acid polypeptide reads, in one-letter code: Small ribosomal subunit protein uS3 (238 aa).

Positions 39 to 108 constitute a KH type-2 domain; sequence IRKFVKKKLF…NVAVNVIEVK (70 aa).

The protein belongs to the universal ribosomal protein uS3 family. Part of the 30S ribosomal subunit. Forms a tight complex with proteins S10 and S14.

Functionally, binds the lower part of the 30S subunit head. Binds mRNA in the 70S ribosome, positioning it for translation. The sequence is that of Small ribosomal subunit protein uS3 from Alkaliphilus oremlandii (strain OhILAs) (Clostridium oremlandii (strain OhILAs)).